The sequence spans 92 residues: Small ribosomal subunit protein bS20 (92 aa).

It belongs to the bacterial ribosomal protein bS20 family.

Its function is as follows. Binds directly to 16S ribosomal RNA. This chain is Small ribosomal subunit protein bS20, found in Magnetococcus marinus (strain ATCC BAA-1437 / JCM 17883 / MC-1).